A 52-amino-acid polypeptide reads, in one-letter code: Photosystem II reaction center protein M (52 aa).

The helical transmembrane segment at 6–26 (FGFAASLLFVGVPTIFLIGLF) threads the bilayer. Positions 31–52 (DGEKSSFYSDTSKGRLSPEPKK) are disordered. Over residues 42–52 (SKGRLSPEPKK) the composition is skewed to basic and acidic residues.

Belongs to the PsbM family. PSII is composed of 1 copy each of membrane proteins PsbA, PsbB, PsbC, PsbD, PsbE, PsbF, PsbH, PsbI, PsbJ, PsbK, PsbL, PsbM, PsbT, PsbX, PsbY, Psb30/Ycf12, peripheral proteins PsbO, CyanoQ (PsbQ), PsbU, PsbV and a large number of cofactors. It forms dimeric complexes.

Its subcellular location is the cellular thylakoid membrane. Its function is as follows. One of the components of the core complex of photosystem II (PSII). PSII is a light-driven water:plastoquinone oxidoreductase that uses light energy to abstract electrons from H(2)O, generating O(2) and a proton gradient subsequently used for ATP formation. It consists of a core antenna complex that captures photons, and an electron transfer chain that converts photonic excitation into a charge separation. This subunit is found at the monomer-monomer interface. This chain is Photosystem II reaction center protein M, found in Prochlorococcus marinus (strain NATL1A).